A 284-amino-acid chain; its full sequence is Origin of replication complex subunit 6 (284 aa).

This sequence belongs to the ORC6 family. As to quaternary structure, component of the origin recognition complex (ORC) composed of at least ORC1 (ORC1A or ORC1B), ORC2, ORC3, ORC4, ORC5 and ORC6. ORC is regulated in a cell-cycle and development dependent manner. It is sequentially assembled at the exit from anaphase of mitosis and disassembled as cells enter S phase. Interacts directly with ORC2, ORC3, ORC4 and ORC5. Follow a cell-cycle regulation with a peak at the G1/S-phase. Mostly expressed in siliques, flowers, flower buds and mature leaves, and, to a lower exent, in roots, leaves and stems.

The protein localises to the nucleus. Component of the origin recognition complex (ORC) that binds origins of replication. DNA-binding is ATP-dependent. The specific DNA sequences that define origins of replication have not been identified yet. ORC is required to assemble the pre-replication complex necessary to initiate DNA replication. This chain is Origin of replication complex subunit 6, found in Arabidopsis thaliana (Mouse-ear cress).